A 123-amino-acid chain; its full sequence is Dihydroneopterin triphosphate 2'-epimerase (123 aa).

It belongs to the DHNA family. In terms of assembly, homooctamer. Dimer of tetramers.

It carries out the reaction 7,8-dihydroneopterin 3'-triphosphate = 7,8-dihydromonapterin 3'-triphosphate. Catalyzes the epimerization of carbon 2' of the side chain of 7,8-dihydroneopterin triphosphate (H2NTP) to form 7,8-dihydromonapterin triphosphate (H2MTP). Is required for tetrahydromonapterin biosynthesis. This chain is Dihydroneopterin triphosphate 2'-epimerase, found in Pseudomonas aeruginosa (strain ATCC 15692 / DSM 22644 / CIP 104116 / JCM 14847 / LMG 12228 / 1C / PRS 101 / PAO1).